The chain runs to 525 residues: GMP synthase [glutamine-hydrolyzing] (525 aa).

The region spanning 9–207 (RILILDFGSQ…VLDICGCAAL (199 aa)) is the Glutamine amidotransferase type-1 domain. C86 functions as the Nucleophile in the catalytic mechanism. Residues H181 and E183 contribute to the active site. One can recognise a GMPS ATP-PPase domain in the interval 208–400 (WTPSNIVDDA…LGLPYDMVYR (193 aa)). An ATP-binding site is contributed by 235–241 (SGGVDSS).

Homodimer.

It carries out the reaction XMP + L-glutamine + ATP + H2O = GMP + L-glutamate + AMP + diphosphate + 2 H(+). It participates in purine metabolism; GMP biosynthesis; GMP from XMP (L-Gln route): step 1/1. Functionally, catalyzes the synthesis of GMP from XMP. This chain is GMP synthase [glutamine-hydrolyzing], found in Pseudomonas aeruginosa (strain LESB58).